A 147-amino-acid polypeptide reads, in one-letter code: MKLILKENIEHLGQIGDIVKVAPGYARNYLLPKGLAIEATEKNAKALEHAKRQLAYKKNKSLEAAKNLVAKLEALSIVLTHQAGEEGKLFGSVTNMEIAAFLKDNGLEIDRKKIVLAEPIKQLGEYSVPVKVHPEVGATLKVTVSAA.

The protein belongs to the bacterial ribosomal protein bL9 family.

Functionally, binds to the 23S rRNA. The protein is Large ribosomal subunit protein bL9 of Trichlorobacter lovleyi (strain ATCC BAA-1151 / DSM 17278 / SZ) (Geobacter lovleyi).